Consider the following 152-residue polypeptide: Small ribosomal subunit protein uS11A (152 aa).

The disordered stretch occupies residues glutamate 131–leucine 152. Residues arginine 143–leucine 152 are compositionally biased toward basic residues.

It belongs to the universal ribosomal protein uS11 family.

The polypeptide is Small ribosomal subunit protein uS11A (Anopheles gambiae (African malaria mosquito)).